We begin with the raw amino-acid sequence, 296 residues long: tRNA (guanine-N(7)-)-methyltransferase (296 aa).

The segment at 1 to 26 (MSKRTREESEMEAGPSTASPGVSVSP) is disordered. Residues Gly101, 124–125 (EI), 168–169 (NS), and Leu188 each bind S-adenosyl-L-methionine. Asp191 is an active-site residue. 266–268 (TEE) lines the S-adenosyl-L-methionine pocket.

Belongs to the class I-like SAM-binding methyltransferase superfamily. TrmB family. In terms of assembly, forms a complex with TRM82.

It localises to the nucleus. It catalyses the reaction guanosine(46) in tRNA + S-adenosyl-L-methionine = N(7)-methylguanosine(46) in tRNA + S-adenosyl-L-homocysteine. It functions in the pathway tRNA modification; N(7)-methylguanine-tRNA biosynthesis. Functionally, catalyzes the formation of N(7)-methylguanine at position 46 (m7G46) in tRNA. The sequence is that of tRNA (guanine-N(7)-)-methyltransferase from Cryptococcus neoformans var. neoformans serotype D (strain JEC21 / ATCC MYA-565) (Filobasidiella neoformans).